The following is a 303-amino-acid chain: Methionyl-tRNA formyltransferase (303 aa).

Residue 106 to 109 (SLLP) coordinates (6S)-5,6,7,8-tetrahydrofolate.

The protein belongs to the Fmt family.

The catalysed reaction is L-methionyl-tRNA(fMet) + (6R)-10-formyltetrahydrofolate = N-formyl-L-methionyl-tRNA(fMet) + (6S)-5,6,7,8-tetrahydrofolate + H(+). Functionally, attaches a formyl group to the free amino group of methionyl-tRNA(fMet). The formyl group appears to play a dual role in the initiator identity of N-formylmethionyl-tRNA by promoting its recognition by IF2 and preventing the misappropriation of this tRNA by the elongation apparatus. This Thermosipho melanesiensis (strain DSM 12029 / CIP 104789 / BI429) protein is Methionyl-tRNA formyltransferase.